Here is a 314-residue protein sequence, read N- to C-terminus: D-alanine--D-alanine ligase (314 aa).

Residues 114–309 (KQLWRAHGLP…FDALVLRILD (196 aa)) form the ATP-grasp domain. 140–195 (IEALGLPLIVKPVHEGSTIGISIVETRDALIAAHAEASRFDSAIMAERFVQGEEYT) provides a ligand contact to ATP. Mg(2+)-binding residues include Asp263, Glu276, and Asn278.

This sequence belongs to the D-alanine--D-alanine ligase family. It depends on Mg(2+) as a cofactor. The cofactor is Mn(2+).

It is found in the cytoplasm. It catalyses the reaction 2 D-alanine + ATP = D-alanyl-D-alanine + ADP + phosphate + H(+). It participates in cell wall biogenesis; peptidoglycan biosynthesis. Cell wall formation. This is D-alanine--D-alanine ligase from Chromohalobacter salexigens (strain ATCC BAA-138 / DSM 3043 / CIP 106854 / NCIMB 13768 / 1H11).